The sequence spans 177 residues: Translation initiation factor IF-3 (177 aa).

The protein belongs to the IF-3 family. Monomer.

The protein resides in the cytoplasm. Its function is as follows. IF-3 binds to the 30S ribosomal subunit and shifts the equilibrium between 70S ribosomes and their 50S and 30S subunits in favor of the free subunits, thus enhancing the availability of 30S subunits on which protein synthesis initiation begins. This Synechocystis sp. (strain ATCC 27184 / PCC 6803 / Kazusa) protein is Translation initiation factor IF-3.